A 107-amino-acid chain; its full sequence is Flagellar hook-basal body complex protein FliE (107 aa).

This sequence belongs to the FliE family.

The protein resides in the bacterial flagellum basal body. This Cupriavidus pinatubonensis (strain JMP 134 / LMG 1197) (Cupriavidus necator (strain JMP 134)) protein is Flagellar hook-basal body complex protein FliE.